Consider the following 659-residue polypeptide: Chaperone protein DnaK (659 aa).

Position 201 is a phosphothreonine; by autocatalysis (threonine 201). The segment covering 571–592 has biased composition (basic and acidic residues); it reads RSALKEDAPTEKIKEASDELSR. The tract at residues 571 to 659 is disordered; sequence RSALKEDAPT…DVEIVDKPND (89 aa). A compositionally biased stretch (low complexity) spans 600–613; that stretch reads AMQSQSASAAANAQ.

It belongs to the heat shock protein 70 family.

In terms of biological role, acts as a chaperone. The sequence is that of Chaperone protein DnaK from Chlamydia abortus (strain DSM 27085 / S26/3) (Chlamydophila abortus).